The primary structure comprises 336 residues: MGNVLAASSPAPPPAGSPPVPGLVSVPPGFTMPPVAGLTPTPDKKEPQEERLPNPGTFEECHRKCKELFPIQMEGVKLIVNKGLSNYFQVNHTISLSTIGESNYHFGATYVGTKQLGPAEAFPVLVGDFDNSGSLNGQIIHQVTNNIRSKIALQTQQSKFVNWQLDTEYRGEDYTASVTLGNPDILVGSGILVAHYLQSITPSLALGGELVYHRRPGEEGTVMSLAGRYTAPSWTATLTLGQAGAHATYYHKANDQLQLGVEFEASARMQDTSVSLGYQLDLPKANLLFKGSIDSNWIVGATLEKKLPPLPLTLAMGAFLNHKKNKFQCGFGLTIG.

Residues 1–58 are disordered; the sequence is MGNVLAASSPAPPPAGSPPVPGLVSVPPGFTMPPVAGLTPTPDKKEPQEERLPNPGTF. Positions 10–21 are enriched in pro residues; it reads PAPPPAGSPPVP. Residues 42–52 show a composition bias toward basic and acidic residues; sequence PDKKEPQEERL.

This sequence belongs to the Tom40 family. In terms of assembly, forms part of the preprotein translocase complex of the outer mitochondrial membrane (TOM complex). Interacts with mitochondrial targeting sequences.

The protein localises to the mitochondrion outer membrane. Its function is as follows. Channel-forming protein essential for import of protein precursors into mitochondria. The polypeptide is Mitochondrial import receptor subunit TOM40 homolog (tomm40) (Xenopus laevis (African clawed frog)).